Here is a 413-residue protein sequence, read N- to C-terminus: MKGSNTFRWAIAIGVVVAAAAFWFWHSRSESPTAAPGVAAQAPHTAAAGRRGMRDGPLAPVQAATATTQAVPRYLSGLGTVTAANTVTVRSRVDGQLIALHFQEGQQVNAGDLLAQIDPSQFKVALAQAQGQLAKDNATLANARRDLARYQQLAKTNLVSRQELDAQQALVNETQGTIKADEANVASAQLQLDWSRITAPVSGRVGLKQVDVGNQISSSDTAGIVVITQTHPIDLIFTLPESDIATVVQAQKAGKTLVVEAWDRTNSHKLSEGVLLSLDNQIDPTTGTIKIKARFTNQDDTLFPNQFVNARMLVDTEQNAVVVPAAAVQMGNEGHFVWVLNDENNVSKMRVKIGIQDNQNVVISAGLSAGDRVVTDGIDRLTEGAKVEVVEPQTTMADEKSPSRHEGQKGARA.

The N-terminal stretch at 1 to 20 (MKGSNTFRWAIAIGVVVAAA) is a signal peptide. Disordered regions lie at residues 31–57 (SPTAAPGVAAQAPHTAAAGRRGMRDGP) and 392–413 (PQTTMADEKSPSRHEGQKGARA). Over residues 397-413 (ADEKSPSRHEGQKGARA) the composition is skewed to basic and acidic residues.

The protein belongs to the membrane fusion protein (MFP) (TC 8.A.1) family. In terms of assembly, part of a tripartite efflux system composed of MdtA, MdtB and MdtC.

The protein localises to the cell inner membrane. This Salmonella heidelberg (strain SL476) protein is Multidrug resistance protein MdtA.